Reading from the N-terminus, the 963-residue chain is Seizure 6-like protein (963 aa).

Positions 1-31 (MPVARPQAAGPDRISLFLVAFLLGSPAAAQA) are cleaved as a signal peptide. Disordered regions lie at residues 28–63 (AAQAEDGGPEGEMHPSTAYLLPSASLESSLEEGVTS), 116–150 (RPLATPTTLQRLGSPASATTKLREPEDPEQPTAPA), and 164–204 (LPHS…TTTS). Residues 32-897 (EDGGPEGEMH…ESSLEGGNMA (866 aa)) are Extracellular-facing. Residues 47–59 (LLPSASLESSLEE) show a composition bias toward low complexity. Positions 120–135 (TPTTLQRLGSPASATT) are enriched in polar residues. A compositionally biased stretch (low complexity) spans 191–204 (TGSASEESQETTTS). Cys221 and Cys248 are disulfide-bonded. The 109-residue stretch at 221-329 (CGVSFSDPEG…GTFQLHYQAF (109 aa)) folds into the CUB 1 domain. Residues Asn251, Asn268, and Asn290 are each glycosylated (N-linked (GlcNAc...) asparagine). In terms of domain architecture, Sushi 1 spans 331–390 (LSCPFPRRPDAGEVTVMDLHSGGVAHFHCHLGYELQGAKTLTCINASKPHWSSQEPVCSA). 3 disulfides stabilise this stretch: Cys333-Cys373, Cys359-Cys388, and Cys392-Cys419. Residues Asn375, Asn398, Asn414, Asn454, Asn516, and Asn558 are each glycosylated (N-linked (GlcNAc...) asparagine). Residues 392-502 (CGGAVHNATI…SAFNIRFEAF (111 aa)) enclose the CUB 2 domain. Residues 505–566 (GHCYEPYIQN…WNDTEPLCRA (62 aa)) enclose the Sushi 2 domain. 3 cysteine pairs are disulfide-bonded: Cys507–Cys549, Cys534–Cys564, and Cys568–Cys594. In terms of domain architecture, CUB 3 spans 568–679 (CGGELSAVAG…QGFIMNYIEV (112 aa)). 2 N-linked (GlcNAc...) asparagine glycosylation sites follow: Asn614 and Asn682. Sushi domains follow at residues 683 to 742 (DSCS…FCEK), 744 to 807 (MYCT…HCVS), and 811 to 872 (LACD…ICKV). Cystine bridges form between Cys685/Cys727, Cys713/Cys740, Cys746/Cys788, Cys774/Cys805, Cys813/Cys855, and Cys841/Cys870. A helical transmembrane segment spans residues 898–918 (LAIFIPVLLISLLLGGAYIYV). Residues 919–963 (TRCRQYSSLRLPLMYSHPYSQITVETEFDNPIYETGETREYEVSI) lie on the Cytoplasmic side of the membrane.

This sequence belongs to the SEZ6 family. As to expression, expressed exclusively in the brain, predominantly in neurons. Wide expression in the gray matter of the brain with high levels in the olfactory bulb, anterior olfactory nuclei, hippocampal formation and cerebellar cortex. Detected diffusely and weakly in the white matter, such as the corpus callosum and cerebellar medulla. In the cerebellar cortex, intensely expressed in Purkinje cells and granule cells. Detected also in interneurons in the molecular layer.

It is found in the cell membrane. The protein localises to the endoplasmic reticulum membrane. Its function is as follows. Candidate tumor suppressor gene. May contribute to specialized endoplasmic reticulum functions in neurons. This Mus musculus (Mouse) protein is Seizure 6-like protein (Sez6l).